Here is a 283-residue protein sequence, read N- to C-terminus: Spore coat polysaccharide biosynthesis protein SpsK (283 aa).

Belongs to the dTDP-4-dehydrorhamnose reductase family.

The protein operates within spore coat biogenesis; spore coat polysaccharide biosynthesis. The protein is Spore coat polysaccharide biosynthesis protein SpsK (spsK) of Bacillus subtilis (strain 168).